Consider the following 211-residue polypeptide: Thymidylate kinase (211 aa).

10–17 (GIDGSGKT) contacts ATP.

The protein belongs to the thymidylate kinase family.

It carries out the reaction dTMP + ATP = dTDP + ADP. Functionally, phosphorylation of dTMP to form dTDP in both de novo and salvage pathways of dTTP synthesis. The protein is Thymidylate kinase of Prochlorococcus marinus (strain NATL2A).